The primary structure comprises 303 residues: MKITVLGCGALGQLWLSMLHQQDHDVQGWLRVPQPFCSVNVIMLNGESFNRNLTTNDPKHLLQSELLLVCLKAWQVSSAVTALLPKLNPECKILLLHNGMGTQEELPLNEHVFLHGVTTHAARRDGNTIIHVASGMTHIGPTSSVIIDDNHLADTLHQALPDVAWHNDISAACWQKLAVNCVINPLTGLYNCRNGDVQRYPELIERLCAEVASVMEMEGYHTSTESLLSYVNNVIRSTADNTSSLLQDLRSQRHTEIDYITGYLLRRARSHGMALPENARLYELIKRKESDYERIGAGLPGSW.

Residues 7-12 (GCGALG), Asn-98, and Ala-122 each bind NADP(+). Asn-98 is a binding site for substrate. The Proton donor role is filled by Lys-176. Substrate is bound by residues Asn-180, Asn-184, Asn-194, and Ser-244. Position 256 (Glu-256) interacts with NADP(+).

This sequence belongs to the ketopantoate reductase family.

Its subcellular location is the cytoplasm. The catalysed reaction is (R)-pantoate + NADP(+) = 2-dehydropantoate + NADPH + H(+). It functions in the pathway cofactor biosynthesis; (R)-pantothenate biosynthesis; (R)-pantoate from 3-methyl-2-oxobutanoate: step 2/2. In terms of biological role, catalyzes the NADPH-dependent reduction of ketopantoate into pantoic acid. The chain is 2-dehydropantoate 2-reductase (panE) from Yersinia pestis.